A 583-amino-acid chain; its full sequence is Tetratricopeptide repeat protein 39C (583 aa).

A disordered region spans residues 1–22; it reads MAGSEQQRPRRRDDGDSDAAAA. TPR repeat units follow at residues 315 to 348, 353 to 386, and 485 to 518; these read SLFM…AVDQ, HVCL…SRWS, and GLKY…ELCR.

The protein belongs to the TTC39 family.

This chain is Tetratricopeptide repeat protein 39C (TTC39C), found in Homo sapiens (Human).